The primary structure comprises 3195 residues: Large tegument protein deneddylase (3195 aa).

The Peptidase C76 domain occupies 10 to 242 (VAAASRSQFD…VEVISAALRA (233 aa)). Catalysis depends on residues Cys-30, Asp-173, and His-175. Disordered stretches follow at residues 287-374 (RGTA…GALA), 2407-2776 (NPAH…DSNY), 2829-3068 (AGVG…AALD), and 3128-3147 (ASDL…APLD). Positions 338–347 (KVKKPNKGKK) are enriched in basic residues. The span at 2470–2482 (KIERASGKNRKTE) shows a compositional bias: basic and acidic residues. Over residues 2491–2503 (AARGRAAAPPTET) the composition is skewed to low complexity. Composition is skewed to basic and acidic residues over residues 2504–2527 (KTTE…RAPH) and 2538–2562 (RPPR…DKAA). Composition is skewed to basic residues over residues 2588 to 2615 (PKTK…HRTH) and 2636 to 2648 (GRQR…GKKR). Composition is skewed to basic and acidic residues over residues 2649–2672 (SGTD…KFSR) and 2687–2696 (ACDRLGERGN). The span at 2701 to 2712 (PRAPASSPPPPG) shows a compositional bias: pro residues. A compositionally biased stretch (basic and acidic residues) spans 2714–2723 (QADHGIDQRE). 2 stretches are compositionally biased toward acidic residues: residues 2748 to 2768 (DDGD…EEDV) and 2835 to 2844 (WSEEDEDAPA). The span at 2850-2864 (STNVEVATHGYTSDD) shows a compositional bias: polar residues. Over residues 2869 to 2878 (DESKRARATR) the composition is skewed to basic and acidic residues. Low complexity predominate over residues 2887-2903 (PASPLAPSTPSSLPTPA). Over residues 2959-2981 (DDARKKQENSSHERKDDGVRWEI) the composition is skewed to basic and acidic residues. Residues 2982–2994 (DLDSDQGDYSDAS) show a composition bias toward acidic residues. 3 stretches are compositionally biased toward basic and acidic residues: residues 2995-3021 (DDCK…KSES), 3050-3062 (SDDK…DPKL), and 3131-3140 (LDDHQSDQPR).

It belongs to the herpesviridae large tegument protein family. As to quaternary structure, interacts with host CUL1 and CUL4A; these interactions inhibit the E3 ligase activity of cullins. Interacts with inner tegument protein. Interacts with capsid vertex specific component CVC2. Interacts with the major capsid protein/MCP.

It localises to the virion tegument. Its subcellular location is the host cytoplasm. It is found in the host nucleus. It carries out the reaction Thiol-dependent hydrolysis of ester, thioester, amide, peptide and isopeptide bonds formed by the C-terminal Gly of ubiquitin (a 76-residue protein attached to proteins as an intracellular targeting signal).. Large tegument protein that plays multiple roles in the viral cycle. During viral entry, remains associated with the capsid while most of the tegument is detached and participates in the capsid transport toward the host nucleus. Plays a role in the routing of the capsid at the nuclear pore complex and subsequent uncoating. Within the host nucleus, acts as a deneddylase and promotes the degradation of nuclear CRLs (cullin-RING ubiquitin ligases) and thereby stabilizes nuclear CRL substrates, while cytoplasmic CRLs remain unaffected. These modifications prevent host cell cycle S-phase progression and create a favorable environment allowing efficient viral genome replication. Participates later in the secondary envelopment of capsids. Indeed, plays a linker role for the association of the outer viral tegument to the capsids together with the inner tegument protein. The protein is Large tegument protein deneddylase (UL36) of Amazona oratrix (yellow-headed parrot).